A 294-amino-acid chain; its full sequence is Homeobox protein Nkx-2.5 (294 aa).

2 disordered regions span residues Gly-48–Phe-69 and Glu-102–Pro-122. A compositionally biased stretch (pro residues) spans Pro-52–Phe-69. The span at Glu-102–Pro-114 shows a compositional bias: basic and acidic residues. The segment at residues Arg-119 to Arg-178 is a DNA-binding region (homeobox).

This sequence belongs to the NK-2 homeobox family. In terms of assembly, homodimer (via the homeobox); binds DNA as homodimer.

The protein resides in the nucleus. Its function is as follows. Transcription factor required for the development of the heart and the spleen. Implicated in commitment to and/or differentiation of the myocardial lineage. Binds to the core DNA motif of promoter. The sequence is that of Homeobox protein Nkx-2.5 (NKX-2.5) from Gallus gallus (Chicken).